The sequence spans 396 residues: S-adenosylmethionine synthase 4 (396 aa).

Residue glutamate 13 coordinates Mg(2+). Histidine 19 contributes to the ATP binding site. A K(+)-binding site is contributed by glutamate 47. Residues glutamate 60 and glutamine 103 each coordinate L-methionine. ATP is bound by residues 171 to 173 (DGK), 239 to 242 (SGRF), aspartate 250, 256 to 257 (RK), alanine 273, lysine 277, and lysine 281. Residue aspartate 250 participates in L-methionine binding. An L-methionine-binding site is contributed by lysine 281.

This sequence belongs to the AdoMet synthase family. Homotetramer. Mn(2+) is required as a cofactor. The cofactor is Mg(2+). Requires Co(2+) as cofactor. It depends on K(+) as a cofactor. As to expression, expressed in roots, stems and leaves (at protein level).

It is found in the cytoplasm. The enzyme catalyses L-methionine + ATP + H2O = S-adenosyl-L-methionine + phosphate + diphosphate. Its pathway is amino-acid biosynthesis; S-adenosyl-L-methionine biosynthesis; S-adenosyl-L-methionine from L-methionine: step 1/1. In terms of biological role, catalyzes the formation of S-adenosylmethionine from methionine and ATP. The reaction comprises two steps that are both catalyzed by the same enzyme: formation of S-adenosylmethionine (AdoMet) and triphosphate, and subsequent hydrolysis of the triphosphate. May be involved in the synthesis of betain in response to abiotic stress such as high salinity. The sequence is that of S-adenosylmethionine synthase 4 (SAMS4) from Atriplex nummularia (Old man saltbush).